Reading from the N-terminus, the 88-residue chain is Large ribosomal subunit protein bL27 (88 aa).

Belongs to the bacterial ribosomal protein bL27 family.

This Mycobacterium leprae (strain TN) protein is Large ribosomal subunit protein bL27.